The primary structure comprises 312 residues: Ribosomal protein L11 methyltransferase (312 aa).

S-adenosyl-L-methionine contacts are provided by T163, G184, D206, and N248.

The protein belongs to the methyltransferase superfamily. PrmA family.

The protein resides in the cytoplasm. The catalysed reaction is L-lysyl-[protein] + 3 S-adenosyl-L-methionine = N(6),N(6),N(6)-trimethyl-L-lysyl-[protein] + 3 S-adenosyl-L-homocysteine + 3 H(+). Functionally, methylates ribosomal protein L11. This chain is Ribosomal protein L11 methyltransferase, found in Clostridium botulinum (strain 657 / Type Ba4).